A 440-amino-acid polypeptide reads, in one-letter code: MSKKVSASYIIIIGLMLFALFFGAGNLIFPPMLGQLAGKNVWVANAGFLVTGVGLPLLAITAFVFSGKQNLQSLASRVHPVFGIVFTTILYLAIGPFFAIPRSGNVSFEIGVKPFLSNDASPVSLIIFTILFFALACLLSLNPSKIIDIVGKFLTPIKLTFIGLLVAVALIRPIGTIQAPSKGYTSQAFFKGFQEGYLTLDALVAFVFGIIIVNALKEQGASTKKQLIVVCAKAAAIAAVLLAVMYTALSYMGASSVEELGILENGAEVLAKVSSYYFGSYGSILLGLMITVACLTTSVGLITACSSFFHELFPNISYKKIAVVLSVFSTLVANIGLTQLIKVSMPVLLTMYPIAISLIFLTFLHSVFKGKTEVYQGSLLFAFIISLFDGLKAAGIKIEVVNRIFTQILPMYNIGLGWLIPAIAGGICGYILSIFRTKTS.

12 helical membrane passes run 9–29 (YIII…NLIF), 46–66 (AGFL…FVFS), 80–100 (PVFG…FFAI), 121–141 (SPVS…LLSL), 149–169 (IVGK…VAVA), 196–216 (GYLT…VNAL), 227–247 (LIVV…VMYT), 284–304 (ILLG…LITA), 321–341 (IAVV…TQLI), 348–368 (LLTM…HSVF), 378–398 (SLLF…GIKI), and 414–434 (IGLG…ILSI).

Belongs to the branched chain amino acid transporter family.

Its subcellular location is the cell membrane. In terms of biological role, branched-chain amino acid transport system which is involved in the uptake of isoleucine and valine. Probably does not transport leucine. Together with BcaP and BraB, plays an important role in the activation of CodY, a branched-chain amino acid-responsive transcriptional regulator that controls the expression of several dozen transcription units in B.subtilis. In Bacillus subtilis (strain 168), this protein is Branched-chain amino acid permease BrnQ.